Here is a 230-residue protein sequence, read N- to C-terminus: Heptaprenylglyceryl phosphate synthase (230 aa).

Lys-12 contributes to the sn-glycerol 1-phosphate binding site. Residues Asp-14 and Thr-40 each contribute to the Mg(2+) site. Residues 159–164, Gly-189, and 209–210 each bind sn-glycerol 1-phosphate; these read YIEYSG and GD.

This sequence belongs to the GGGP/HepGP synthase family. Group I subfamily. As to quaternary structure, homodimer. Mg(2+) serves as cofactor.

The enzyme catalyses sn-glycerol 1-phosphate + all-trans-heptaprenyl diphosphate = 3-heptaprenyl-sn-glycero-1-phosphate + diphosphate. Its pathway is membrane lipid metabolism; glycerophospholipid metabolism. Its function is as follows. Prenyltransferase that catalyzes in vivo the transfer of the heptaprenyl moiety of heptaprenyl pyrophosphate (HepPP; 35 carbon atoms) to the C3 hydroxyl of sn-glycerol-1-phosphate (G1P), producing heptaprenylglyceryl phosphate (HepGP). This reaction is an ether-bond-formation step in the biosynthesis of archaea-type G1P-based membrane lipids found in Bacillales. The chain is Heptaprenylglyceryl phosphate synthase from Staphylococcus aureus (strain bovine RF122 / ET3-1).